Reading from the N-terminus, the 222-residue chain is U-scoloptoxin(11)-Sm5a (222 aa).

The protein belongs to the scoloptoxin-11 family. Post-translationally, contains 8 disulfide bonds. As to expression, expressed by the venom gland.

The protein resides in the secreted. In Scolopendra morsitans (Tanzanian blue ringleg centipede), this protein is U-scoloptoxin(11)-Sm5a.